The primary structure comprises 385 residues: Beta sliding clamp (385 aa).

It belongs to the beta sliding clamp family. Forms a ring-shaped head-to-tail homodimer around DNA which binds and tethers DNA polymerases and other proteins to the DNA. The DNA replisome complex has a single clamp-loading complex (3 tau and 1 each of delta, delta', psi and chi subunits) which binds 3 Pol III cores (1 core on the leading strand and 2 on the lagging strand) each with a beta sliding clamp dimer. Additional proteins in the replisome are other copies of gamma, psi and chi, Ssb, DNA helicase and RNA primase.

The protein resides in the cytoplasm. Its function is as follows. Confers DNA tethering and processivity to DNA polymerases and other proteins. Acts as a clamp, forming a ring around DNA (a reaction catalyzed by the clamp-loading complex) which diffuses in an ATP-independent manner freely and bidirectionally along dsDNA. Initially characterized for its ability to contact the catalytic subunit of DNA polymerase III (Pol III), a complex, multichain enzyme responsible for most of the replicative synthesis in bacteria; Pol III exhibits 3'-5' exonuclease proofreading activity. The beta chain is required for initiation of replication as well as for processivity of DNA replication. The chain is Beta sliding clamp (dnaN) from Borreliella burgdorferi (strain ATCC 35210 / DSM 4680 / CIP 102532 / B31) (Borrelia burgdorferi).